The sequence spans 194 residues: NAD(P)H-quinone oxidoreductase subunit I (194 aa).

4Fe-4S ferredoxin-type domains lie at glycine 55 to glutamate 84 and asparagine 95 to glutamate 124. [4Fe-4S] cluster-binding residues include cysteine 64, cysteine 67, cysteine 70, cysteine 74, cysteine 104, cysteine 107, cysteine 110, and cysteine 114. Residues aspartate 173–alanine 194 form a disordered region. The span at alanine 183–alanine 194 shows a compositional bias: basic and acidic residues.

Belongs to the complex I 23 kDa subunit family. NDH-1 is composed of at least 11 different subunits. The cofactor is [4Fe-4S] cluster.

The protein resides in the cellular thylakoid membrane. It catalyses the reaction a plastoquinone + NADH + (n+1) H(+)(in) = a plastoquinol + NAD(+) + n H(+)(out). The catalysed reaction is a plastoquinone + NADPH + (n+1) H(+)(in) = a plastoquinol + NADP(+) + n H(+)(out). In terms of biological role, NDH-1 shuttles electrons from an unknown electron donor, via FMN and iron-sulfur (Fe-S) centers, to quinones in the respiratory and/or the photosynthetic chain. The immediate electron acceptor for the enzyme in this species is believed to be plastoquinone. Couples the redox reaction to proton translocation, and thus conserves the redox energy in a proton gradient. In Nostoc sp. (strain PCC 7120 / SAG 25.82 / UTEX 2576), this protein is NAD(P)H-quinone oxidoreductase subunit I.